The chain runs to 442 residues: MMRKLAILSVSSFLFVEALFQEYQCYGSSSNTRVLNELNYDNAGTNLYNELEMNYYGKQENWYSLKKNSRSLGENDDGDNDNGNNNNGNNNNGDNGREGKDEDKRDGNNEDNEKLRKPKHKKLKQPGDGNPDPNANPNVDPNANPNVDPNANPNANPNANPNANPNANPNANPNANPNANPNANPNANPNANPNANPNANPNANPNANPNVDPNANPNANPNANPNANPNANPNANPNANPNANPNANPNANPNANPNANPNANPNANPNANPNANPNANPNANPNANPNANPNANPNANPNANPNANPNANPNANPNKNNQGNGQGHNMPNDPNRNVDENANANNAVKNNNNEEPSDKHIEQYLKKIQNSLSTEWSPCSVTCGNGIQVRIKPGSADKPKDQLDYENDIEKKICKMEKCSSVFNVVNSSIGLIMVLSFLFLN.

Residues 1-18 form the signal peptide; that stretch reads MMRKLAILSVSSFLFVEA. Positions 69 to 357 are disordered; that stretch reads SRSLGENDDG…VKNNNNEEPS (289 aa). Positions 81-94 are enriched in low complexity; the sequence is DNGNNNNGNNNNGD. Positions 95 to 115 are enriched in basic and acidic residues; sequence NGREGKDEDKRDGNNEDNEKL. The segment at 114-121 is required for the binding to heparan sulfate proteoglycans (HSPGs) on the surface of host hepatocytes; it reads KLRKPKHK. Positions 122–126 are region I; contains the proteolytic cleavage site; it reads KLKQP. Residues 130–318 show a composition bias toward low complexity; sequence NPDPNANPNV…PNANPNANPN (189 aa). A run of 46 repeats spans residues 134-137, 138-141, 142-145, 146-149, 150-153, 154-157, 158-161, 162-165, 166-169, 170-173, 174-177, 178-181, 182-185, 186-189, 190-193, 194-197, 198-201, 202-205, 206-209, 210-213, 214-217, 218-221, 222-225, 226-229, 230-233, 234-237, 238-241, 242-245, 246-249, 250-253, 254-257, 258-261, 262-265, 266-269, 270-273, 274-277, 278-281, 282-285, 286-289, 290-293, 294-297, 298-301, 302-305, 306-309, 310-313, and 314-317. A 46 X 4 AA tandem repeats of N-[AV]-[ND]-P region spans residues 134–317; the sequence is NANPNVDPNA…NPNANPNANP (184 aa). Residues 319-334 are compositionally biased toward polar residues; that stretch reads KNNQGNGQGHNMPNDP. The span at 340-354 shows a compositional bias: low complexity; that stretch reads ENANANNAVKNNNNE. One can recognise a TSP type-1 domain in the interval 367 to 420; sequence KIQNSLSTEWSPCSVTCGNGIQVRIKPGSADKPKDQLDYENDIEKKICKMEKCS. Disulfide bonds link C379-C414 and C383-C419. Residue T382 is glycosylated (O-linked (Fuc) threonine). C419 is lipidated: GPI-anchor amidated cysteine. The propeptide at 420 to 442 is removed in mature form; that stretch reads SSVFNVVNSSIGLIMVLSFLFLN.

This sequence belongs to the plasmodium circumsporozoite protein family. In terms of processing, during host cell invasion, proteolytically cleaved at the cell membrane in the region I by a papain-like cysteine protease of parasite origin. Cleavage is triggered by the sporozoite contact with highly sulfated heparan sulfate proteoglycans (HSPGs) present on the host hepatocyte cell surface. Cleavage exposes the TSP type-1 (TSR) domain and is required for productive invasion of host hepatocytes but not for adhesion to the host cell membrane. Cleavage is dispensable for sporozoite development in the oocyst, motility and for traversal of host and vector cells. Post-translationally, O-glycosylated; maybe by POFUT2.

The protein resides in the cell membrane. It is found in the cytoplasm. In terms of biological role, essential sporozoite protein. In the mosquito vector, required for sporozoite development in the oocyst, migration through the vector hemolymph and entry into the vector salivary glands. In the vertebrate host, required for sporozoite migration through the host dermis and infection of host hepatocytes. Binds to highly sulfated heparan sulfate proteoglycans (HSPGs) on the surface of host hepatocytes. In the vertebrate host, binds to highly sulfated heparan sulfate proteoglycans (HSPGs) on the surface of host hepatocytes and is required for sporozoite invasion of the host hepatocytes. This is Circumsporozoite protein from Plasmodium falciparum (isolate Wellcome).